The sequence spans 124 residues: Small ribosomal subunit protein uS12 (124 aa).

Asp-89 carries the post-translational modification 3-methylthioaspartic acid.

This sequence belongs to the universal ribosomal protein uS12 family. Part of the 30S ribosomal subunit. Contacts proteins S8 and S17. May interact with IF1 in the 30S initiation complex.

Its function is as follows. With S4 and S5 plays an important role in translational accuracy. Functionally, interacts with and stabilizes bases of the 16S rRNA that are involved in tRNA selection in the A site and with the mRNA backbone. Located at the interface of the 30S and 50S subunits, it traverses the body of the 30S subunit contacting proteins on the other side and probably holding the rRNA structure together. The combined cluster of proteins S8, S12 and S17 appears to hold together the shoulder and platform of the 30S subunit. This is Small ribosomal subunit protein uS12 from Edwardsiella ictaluri (strain 93-146).